We begin with the raw amino-acid sequence, 947 residues long: Protocadherin alpha-4 (947 aa).

Positions 1-29 are cleaved as a signal peptide; the sequence is MEFSWGSGQESQRLLLSFLFLAIWEPGNS. Cadherin domains are found at residues 30–133, 134–242, 243–350, 351–455, 456–565, and 573–681; these read QLHY…PPTF, PTTQ…SPVF, DRSL…APEL, EFKS…APAF, AQPE…APTL, and SGGI…APSR. Residues 30 to 697 lie on the Extracellular side of the membrane; the sequence is QLHYSIPEEA…NAEASLVDVN (668 aa). A disulfide bridge connects residues cysteine 96 and cysteine 102. 2 N-linked (GlcNAc...) asparagine glycosylation sites follow: asparagine 257 and asparagine 265. An N-linked (GlcNAc...) asparagine glycan is attached at asparagine 548. A helical transmembrane segment spans residues 698–718; sequence VYLIIAICAVSSLLVLTLLLY. Over 719 to 947 the chain is Cytoplasmic; it reads SALRCSTVPS…GNSTTDNSDQ (229 aa). 6 PXXP repeats span residues 734-737, 774-777, 796-799, 829-832, 870-873, and 888-891; these read PPKP, PSLS, PRQP, PGGP, PGNP, and PGSP. Residues 734–891 are 6 X 4 AA repeats of P-X-X-P; sequence PPKPVMVCSS…PDKFIIPGSP (158 aa). The required for interaction with FYN stretch occupies residues 738 to 947; the sequence is VMVCSSAVGS…GNSTTDNSDQ (210 aa). 2 disordered regions span residues 761–805 and 824–853; these read GEYP…DWRY and ILRAGPGGPDQQWPTVSSATPEPEAGEVSP. The disordered stretch occupies residues 897–947; it reads RQESANNQIDKSDFITFGKKEETKKKKKKKKGNKTQEKKEKGNSTTDNSDQ. A compositionally biased stretch (basic and acidic residues) spans 906–920; sequence DKSDFITFGKKEETK.

In terms of assembly, forms homodimers in trans (molecules expressed by two different cells). Forms promiscuous heterodimers in cis (at the plasma membrane of the same cell) with other protocadherins. Interacts with FYN. As to expression, detected in brain.

Its subcellular location is the cell membrane. In terms of biological role, calcium-dependent cell-adhesion protein involved in cells self-recognition and non-self discrimination. Thereby, it is involved in the establishment and maintenance of specific neuronal connections in the brain. The sequence is that of Protocadherin alpha-4 from Rattus norvegicus (Rat).